Consider the following 499-residue polypeptide: Glycerol kinase 2 (499 aa).

Thr-13 contributes to the ADP binding site. ATP-binding residues include Thr-13, Thr-14, and Ser-15. Thr-13 provides a ligand contact to sn-glycerol 3-phosphate. Arg-17 is an ADP binding site. Residues Arg-83, Glu-84, Tyr-134, and Asp-241 each contribute to the sn-glycerol 3-phosphate site. Residues Arg-83, Glu-84, Tyr-134, Asp-241, and Gln-242 each contribute to the glycerol site. Residues Thr-263 and Gly-306 each contribute to the ADP site. ATP is bound by residues Thr-263, Gly-306, Gln-310, and Gly-407. Residue Gly-407 participates in ADP binding.

The protein belongs to the FGGY kinase family.

It catalyses the reaction glycerol + ATP = sn-glycerol 3-phosphate + ADP + H(+). Its pathway is polyol metabolism; glycerol degradation via glycerol kinase pathway; sn-glycerol 3-phosphate from glycerol: step 1/1. In terms of biological role, key enzyme in the regulation of glycerol uptake and metabolism. Catalyzes the phosphorylation of glycerol to yield sn-glycerol 3-phosphate. The protein is Glycerol kinase 2 of Saccharolobus solfataricus (strain ATCC 35092 / DSM 1617 / JCM 11322 / P2) (Sulfolobus solfataricus).